A 334-amino-acid polypeptide reads, in one-letter code: Mevalonate kinase (334 aa).

Residue 110–120 participates in ATP binding; it reads PVGAGLGSSAA. Aspartate 161 serves as the catalytic Proton acceptor.

This sequence belongs to the GHMP kinase family. Mevalonate kinase subfamily. In terms of assembly, homodimer. It depends on Mg(2+) as a cofactor.

It localises to the cytoplasm. The enzyme catalyses (R)-mevalonate + ATP = (R)-5-phosphomevalonate + ADP + H(+). Its pathway is isoprenoid biosynthesis; isopentenyl diphosphate biosynthesis via mevalonate pathway; isopentenyl diphosphate from (R)-mevalonate: step 1/3. Its function is as follows. Catalyzes the phosphorylation of (R)-mevalonate (MVA) to (R)-mevalonate 5-phosphate (MVAP). Functions in the mevalonate (MVA) pathway leading to isopentenyl diphosphate (IPP), a key precursor for the biosynthesis of isoprenoid compounds such as archaeal membrane lipids. This Pyrococcus furiosus (strain ATCC 43587 / DSM 3638 / JCM 8422 / Vc1) protein is Mevalonate kinase.